Here is a 226-residue protein sequence, read N- to C-terminus: Ribose-5-phosphate isomerase A (226 aa).

Substrate is bound by residues 25–28 (TGST), 81–84 (DGAD), and 94–97 (KGGG). Glu103 functions as the Proton acceptor in the catalytic mechanism. Lys121 lines the substrate pocket.

Belongs to the ribose 5-phosphate isomerase family. As to quaternary structure, homodimer.

It catalyses the reaction aldehydo-D-ribose 5-phosphate = D-ribulose 5-phosphate. The protein operates within carbohydrate degradation; pentose phosphate pathway; D-ribose 5-phosphate from D-ribulose 5-phosphate (non-oxidative stage): step 1/1. Catalyzes the reversible conversion of ribose-5-phosphate to ribulose 5-phosphate. In Enterococcus faecalis (strain ATCC 700802 / V583), this protein is Ribose-5-phosphate isomerase A.